Reading from the N-terminus, the 65-residue chain is Large ribosomal subunit protein bL32 (65 aa).

This sequence belongs to the bacterial ribosomal protein bL32 family.

This chain is Large ribosomal subunit protein bL32, found in Metamycoplasma arthritidis (strain 158L3-1) (Mycoplasma arthritidis).